The chain runs to 419 residues: S-adenosylmethionine synthase (419 aa).

His15 provides a ligand contact to ATP. A Mg(2+)-binding site is contributed by Asp17. Glu43 is a binding site for K(+). L-methionine is bound by residues Glu56 and Gln100. The interval 100 to 110 (QSPDIAQGVDE) is flexible loop. ATP-binding positions include 171-173 (DGK), 248-249 (KF), Asp257, 263-264 (RK), Ala280, and Lys284. Asp257 serves as a coordination point for L-methionine. Lys288 contacts L-methionine.

Belongs to the AdoMet synthase family. As to quaternary structure, homotetramer; dimer of dimers. The cofactor is Mg(2+). K(+) serves as cofactor.

It is found in the cytoplasm. It carries out the reaction L-methionine + ATP + H2O = S-adenosyl-L-methionine + phosphate + diphosphate. It functions in the pathway amino-acid biosynthesis; S-adenosyl-L-methionine biosynthesis; S-adenosyl-L-methionine from L-methionine: step 1/1. Its function is as follows. Catalyzes the formation of S-adenosylmethionine (AdoMet) from methionine and ATP. The overall synthetic reaction is composed of two sequential steps, AdoMet formation and the subsequent tripolyphosphate hydrolysis which occurs prior to release of AdoMet from the enzyme. In Synechococcus sp. (strain WH7803), this protein is S-adenosylmethionine synthase.